A 72-amino-acid polypeptide reads, in one-letter code: Translation initiation factor IF-1 2 (72 aa).

Positions 1–72 constitute an S1-like domain; sequence MAKDDVIQMQ…SRARIVFRTK (72 aa).

It belongs to the IF-1 family. Component of the 30S ribosomal translation pre-initiation complex which assembles on the 30S ribosome in the order IF-2 and IF-3, IF-1 and N-formylmethionyl-tRNA(fMet); mRNA recruitment can occur at any time during PIC assembly.

It localises to the cytoplasm. Its function is as follows. One of the essential components for the initiation of protein synthesis. Stabilizes the binding of IF-2 and IF-3 on the 30S subunit to which N-formylmethionyl-tRNA(fMet) subsequently binds. Helps modulate mRNA selection, yielding the 30S pre-initiation complex (PIC). Upon addition of the 50S ribosomal subunit IF-1, IF-2 and IF-3 are released leaving the mature 70S translation initiation complex. In Cupriavidus necator (strain ATCC 17699 / DSM 428 / KCTC 22496 / NCIMB 10442 / H16 / Stanier 337) (Ralstonia eutropha), this protein is Translation initiation factor IF-1 2.